Consider the following 429-residue polypeptide: Growth/differentiation factor 2 (429 aa).

The first 22 residues, 1 to 22 (MCPGALWVALPLLSLLAGSLQG), serve as a signal peptide directing secretion. Positions 23–319 (KPLQSWGRGS…AGSTLARRKR (297 aa)) are excised as a propeptide. N71 and N136 each carry an N-linked (GlcNAc...) asparagine glycan. Basic and acidic residues predominate over residues 283–301 (VLKKLSKDGSTEAGESSHE). Residues 283 to 308 (VLKKLSKDGSTEAGESSHEEDTDGHV) are disordered. 3 disulfide bridges follow: C327/C393, C356/C426, and C360/C428. An interaction with ENG region spans residues 402 to 416 (SVLYKDDMGVPTLKY).

The protein belongs to the TGF-beta family. As to quaternary structure, homodimer; disulfide-linked. Detected in extracellular fluid as mature homodimer, and in complex with its propeptide. Interacts with ACVRL1, BMPR2 and ACVR2B with high affinity (in vitro). Identified in a complex with ACVRL1 and ACVR2B. Has ten times lower affinity for ACVR2A (in vitro). Interacts with ENG, forming a heterotetramer with a 2:2 stoichiometry. Can form a heteromeric complex with ENG and ACVRL1. Interacts with type I receptor ACVR1. In terms of processing, a reversible disulfide bond can be formed between the two subunits in the homodimer; this has no effect on GDF2 activity. Detected in blood plasma (at protein level).

Its subcellular location is the secreted. Potent circulating inhibitor of angiogenesis. Signals through the type I activin receptor ACVRL1 but not other Alks. Signaling through SMAD1 in endothelial cells requires TGF-beta coreceptor endoglin/ENG. In Homo sapiens (Human), this protein is Growth/differentiation factor 2 (GDF2).